Reading from the N-terminus, the 165-residue chain is Group 10 secretory phospholipase A2 (165 aa).

The N-terminal stretch at 1 to 31 is a signal peptide; the sequence is MGPLPVCLPIMLLLLLPSLLLLLLLPGPGSG. Residues 32–42 constitute a propeptide that is removed on maturation; that stretch reads EASRILRVHRR. 8 cysteine pairs are disulfide-bonded: C53–C111, C67–C157, C69–C85, C84–C139, C90–C164, C91–C132, C100–C125, and C118–C130. Ca(2+)-binding residues include F68, G70, and G72. H88 is an active-site residue. Ca(2+) is bound at residue D89. N-linked (GlcNAc...) asparagine glycosylation occurs at N113. The active site involves D133.

This sequence belongs to the phospholipase A2 family. Interacts with PLA2R1; this interaction mediates PLA2G10 clearance and inactivation. It depends on Ca(2+) as a cofactor. In terms of tissue distribution, found in spleen, thymus, peripheral blood leukocytes, pancreas, lung, and colon. Expressed in neuronal fibers in dorsal root ganglia and in peripheral tissues including stomach, white adipose tissue and prostate (at protein level).

Its subcellular location is the secreted. The protein localises to the lysosome. It localises to the cytoplasmic vesicle. The protein resides in the secretory vesicle. It is found in the acrosome. It carries out the reaction a 1,2-diacyl-sn-glycero-3-phosphocholine + H2O = a 1-acyl-sn-glycero-3-phosphocholine + a fatty acid + H(+). It catalyses the reaction 1-hexadecanoyl-2-(9Z-octadecenoyl)-sn-glycero-3-phosphocholine + H2O = 1-hexadecanoyl-sn-glycero-3-phosphocholine + (9Z)-octadecenoate + H(+). The catalysed reaction is 1-octadecanoyl-2-(5Z,8Z,11Z,14Z-eicosatetraenoyl)-sn-glycero-3-phosphocholine + H2O = 1-octadecanoyl-sn-glycero-3-phosphocholine + (5Z,8Z,11Z,14Z)-eicosatetraenoate + H(+). The enzyme catalyses 1,2-dihexadecanoyl-sn-glycero-3-phosphocholine + H2O = 1-hexadecanoyl-sn-glycero-3-phosphocholine + hexadecanoate + H(+). It carries out the reaction 1-hexadecanoyl-2-(9Z-octadecenoyl)-sn-glycero-3-phosphoglycerol + H2O = 1-hexadecanoyl-sn-glycero-3-phosphoglycerol + (9Z)-octadecenoate + H(+). It catalyses the reaction 1,2-dihexadecanoyl-sn-glycero-3-phospho-(1'-sn-glycerol) + H2O = 1-hexadecanoyl-sn-glycero-3-phospho-(1'-sn-glycerol) + hexadecanoate + H(+). The catalysed reaction is 1-hexadecanoyl-2-(9Z-octadecenoyl)-sn-glycero-3-phospho-L-serine + H2O = 1-hexadecanoyl-sn-glycero-3-phospho-L-serine + (9Z)-octadecenoate + H(+). The enzyme catalyses 1-hexadecanoyl-2-(9Z,12Z-octadecadienoyl)-sn-glycero-3-phosphoethanolamine + H2O = 1-hexadecanoyl-sn-glycero-3-phosphoethanolamine + (9Z,12Z)-octadecadienoate + H(+). It carries out the reaction 1-hexadecanoyl-2-(9Z-octadecenoyl)-sn-glycero-3-phosphate + H2O = 1-hexadecanoyl-sn-glycero-3-phosphate + (9Z)-octadecenoate + H(+). It catalyses the reaction 1-O-hexadecyl-2-acetyl-sn-glycero-3-phosphocholine + H2O = 1-O-hexadecyl-sn-glycero-3-phosphocholine + acetate + H(+). Inhibited by methyl indoxam. Its function is as follows. Secretory calcium-dependent phospholipase A2 that primarily targets extracellular phospholipids. Hydrolyzes the ester bond of the fatty acyl group attached at sn-2 position of phospholipids with preference for phosphatidylcholines and phosphatidylglycerols over phosphatidylethanolamines. Preferentially releases sn-2 omega-6 and omega-3 polyunsaturated fatty acyl (PUFA) chains over saturated fatty acyls. Contributes to phospholipid remodeling of very low-density lipoprotein (VLDL), low-density lipoprotein (LDL) and high-density lipoprotein (HDL) particles. Hydrolyzes LDL phospholipids releasing unsaturated fatty acids that regulate macrophage differentiation toward foam cells. Efficiently hydrolyzes and inactivates platelet activating factor (PAF), a potent lipid mediator present in oxidized LDL. May act in an autocrine and paracrine manner. Secreted by lung epithelium, targets membrane phospholipids of infiltrating eosinophils, releasing arachidonate and boosting eicosanoid and cysteinyl leukotriene synthesis involved in airway inflammatory response. Secreted by gut epithelium, hydrolyzes dietary and biliary phosphatidylcholines in the gastrointestinal lumen. Plays a stem cell regulator role in colon epithelium. Within intracellular compartment, mediates Paneth-like cell differentiation and its stem cell supporting functions by inhibiting the Wnt signaling pathway in intestinal stem cell (ISC). Secreted in the intestinal lumen upon inflammation, acts in an autocrine way and promotes prostaglandin E2 synthesis that stimulates Wnt signaling pathway in ISCs and tissue regeneration. May participate in hair follicle morphogenesis by regulating phosphatidylethanolamines metabolism at the outermost epithelial layer and facilitating melanin synthesis. By releasing lysophosphatidylcholines (LPCs) at sperm acrosome, controls sperm cell capacitation, acrosome reaction and overall fertility. May promote neurite outgrowth in neuron fibers involved in nociception. Contributes to lipid remodeling of cellular membranes and generation of lipid mediators involved in pathogen clearance. Cleaves sn-2 fatty acyl chains of phosphatidylglycerols and phosphatidylethanolamines, which are major components of membrane phospholipids in bacteria. Displays bactericidal activity against Gram-positive bacteria by directly hydrolyzing phospholipids of the bacterial membrane. In pulmonary epithelium, may contribute to host defense response against adenoviral infection. Prevents adenovirus entry into host cells by hydrolyzing host cell plasma membrane, releasing C16:0 LPCs that inhibit virus-mediated membrane fusion and viral infection. Likely prevents adenoviral entry into the endosomes of host cells. May play a role in maturation and activation of innate immune cells including macrophages, group 2 innate lymphoid cells and mast cells. The chain is Group 10 secretory phospholipase A2 (PLA2G10) from Homo sapiens (Human).